A 365-amino-acid chain; its full sequence is Isopentenyl-diphosphate delta-isomerase (365 aa).

Substrate is bound at residue arginine 8 to lysine 9. FMN is bound by residues serine 67 to threonine 69, serine 97, and asparagine 126. Serine 97–arginine 99 contacts substrate. Position 160 (glutamine 160) interacts with substrate. Glutamate 161 serves as a coordination point for Mg(2+). FMN contacts are provided by residues lysine 192, threonine 222, glycine 272–arginine 274, and alanine 293–leucine 294.

This sequence belongs to the IPP isomerase type 2 family. In terms of assembly, homooctamer. Dimer of tetramers. FMN is required as a cofactor. NADPH serves as cofactor. It depends on Mg(2+) as a cofactor.

The protein localises to the cytoplasm. It catalyses the reaction isopentenyl diphosphate = dimethylallyl diphosphate. Its function is as follows. Involved in the biosynthesis of isoprenoids. Catalyzes the 1,3-allylic rearrangement of the homoallylic substrate isopentenyl (IPP) to its allylic isomer, dimethylallyl diphosphate (DMAPP). In Methanosarcina acetivorans (strain ATCC 35395 / DSM 2834 / JCM 12185 / C2A), this protein is Isopentenyl-diphosphate delta-isomerase.